The chain runs to 314 residues: L-lactate dehydrogenase 2 (314 aa).

Residues V16, D37, K42, Y68, and 82–83 (GL) each bind NAD(+). Substrate contacts are provided by residues Q85, R91, and 123-126 (NPVD). NAD(+) is bound by residues 121–123 (ATN) and S146. A substrate-binding site is contributed by 151–154 (DSAR). Positions 156 and 171 each coordinate beta-D-fructose 1,6-bisphosphate. Catalysis depends on H178, which acts as the Proton acceptor. Position 223 is a phosphotyrosine (Y223). T232 provides a ligand contact to substrate.

The protein belongs to the LDH/MDH superfamily. LDH family. Homotetramer.

It is found in the cytoplasm. It catalyses the reaction (S)-lactate + NAD(+) = pyruvate + NADH + H(+). It participates in fermentation; pyruvate fermentation to lactate; (S)-lactate from pyruvate: step 1/1. Allosterically activated by fructose 1,6-bisphosphate (FBP). Catalyzes the conversion of lactate to pyruvate. The polypeptide is L-lactate dehydrogenase 2 (Bacillus anthracis).